A 197-amino-acid chain; its full sequence is Recombination protein RecR (197 aa).

A C4-type zinc finger spans residues 57-72 (CSVCFGITEDDPCRFC). One can recognise a Toprim domain in the interval 79 to 174 (GAICVVEEPQ…RVTRLAHGIP (96 aa)).

It belongs to the RecR family.

May play a role in DNA repair. It seems to be involved in an RecBC-independent recombinational process of DNA repair. It may act with RecF and RecO. The sequence is that of Recombination protein RecR from Geobacter sulfurreducens (strain ATCC 51573 / DSM 12127 / PCA).